A 496-amino-acid polypeptide reads, in one-letter code: L-arabinose isomerase (496 aa).

Positions 306, 331, 348, and 447 each coordinate Mn(2+).

The protein belongs to the arabinose isomerase family. Mn(2+) is required as a cofactor.

The catalysed reaction is beta-L-arabinopyranose = L-ribulose. It participates in carbohydrate degradation; L-arabinose degradation via L-ribulose; D-xylulose 5-phosphate from L-arabinose (bacterial route): step 1/3. Its function is as follows. Catalyzes the conversion of L-arabinose to L-ribulose. This is L-arabinose isomerase from Geobacillus thermodenitrificans (strain NG80-2).